A 357-amino-acid polypeptide reads, in one-letter code: Alanine racemase (357 aa).

Lysine 35 (proton acceptor; specific for D-alanine) is an active-site residue. Lysine 35 is subject to N6-(pyridoxal phosphate)lysine. Arginine 131 serves as a coordination point for substrate. Catalysis depends on tyrosine 256, which acts as the Proton acceptor; specific for L-alanine. Methionine 304 is a binding site for substrate.

It belongs to the alanine racemase family. Pyridoxal 5'-phosphate is required as a cofactor.

It catalyses the reaction L-alanine = D-alanine. The protein operates within amino-acid biosynthesis; D-alanine biosynthesis; D-alanine from L-alanine: step 1/1. Catalyzes the interconversion of L-alanine and D-alanine. May also act on other amino acids. This chain is Alanine racemase (alr), found in Legionella pneumophila (strain Lens).